The sequence spans 156 residues: Small ribosomal subunit protein uS7 (156 aa).

Belongs to the universal ribosomal protein uS7 family. In terms of assembly, part of the 30S ribosomal subunit. Contacts proteins S9 and S11.

Its function is as follows. One of the primary rRNA binding proteins, it binds directly to 16S rRNA where it nucleates assembly of the head domain of the 30S subunit. Is located at the subunit interface close to the decoding center, probably blocks exit of the E-site tRNA. This chain is Small ribosomal subunit protein uS7, found in Hahella chejuensis (strain KCTC 2396).